A 502-amino-acid polypeptide reads, in one-letter code: MYSIAFMLVLRKMDEIISHTLAFQALVSLILLISITKWLSNSPKNKNSSPPSPRKLPILGNLLQLGSLPHHNLRSMARKHGPIMLLHLGSVRPVSSRRRPRGNHENSRSRLRRPRGSRSAALQLQGRVGGYGEYWRQLKTICVVQLLSNKRVQSFRSVREEETELLMKKIGDSSGNVNLSHMFTQLTNDVVCRSAIGRKYGAGDENGEKFLEILREFLELLGAISIGDFVPSLWWINRINGFDRRVDRIAKEMDEFLEKVIHERLENPAAKAEENFVDILLEIYRNNSAGVSIDRDSIKAIILDVFAAGTDTTAVVLEWAMTELLRHPEIMKKLQSEVRQVVKDKHNITDDDIEKMHYLKAVMKETMRFHTPIPLLVPRVARNDVEVMGYDVPVGTMVMINAWAIGRDPTSWDEPEKFRPERFLNSSVDFKGLDFELIPFGAGRRGCPGTTFPMATLEFTLANLMQKFDWELPHECRELDMSERPGVAIRRVIPLLAIGTKM.

A helical membrane pass occupies residues 16 to 36 (IISHTLAFQALVSLILLISIT). The disordered stretch occupies residues 93–119 (PVSSRRRPRGNHENSRSRLRRPRGSRS). Residue cysteine 447 coordinates heme.

It belongs to the cytochrome P450 family. The cofactor is heme.

The protein resides in the membrane. The protein is Cytochrome P450 71A8 (CYP71A8) of Mentha piperita (Peppermint).